The primary structure comprises 23 residues: Caerulein precursor fragment BM2 (23 aa).

Expressed by the skin glands.

The protein localises to the secreted. Its function is as follows. Antimicrobial peptide. In Xenopus boumbaensis (Mawa clawed frog), this protein is Caerulein precursor fragment BM2.